A 415-amino-acid chain; its full sequence is Transcription termination factor Rho (415 aa).

Positions 52–119 (ADIASGVLDI…TDVVRVNGRT (68 aa)) constitute a Rho RNA-BD domain. ATP-binding positions include 161 to 166 (GKGQRG), 173 to 178 (KTGKTV), and R204.

This sequence belongs to the Rho family. In terms of assembly, homohexamer. The homohexamer assembles into an open ring structure.

Its function is as follows. Facilitates transcription termination by a mechanism that involves Rho binding to the nascent RNA, activation of Rho's RNA-dependent ATPase activity, and release of the mRNA from the DNA template. The protein is Transcription termination factor Rho of Streptomyces coelicolor (strain ATCC BAA-471 / A3(2) / M145).